The following is a 102-amino-acid chain: Circadian clock oscillator protein KaiA (102 aa).

A KaiA C-terminal domain is found at 1 to 102 (MTQEVDQQIL…CEAYRGAIFK (102 aa)).

Belongs to the KaiA family. As to quaternary structure, homodimer. The KaiABC complex composition changes during the circadian cycle to control KaiC phosphorylation. Complexes KaiC(6), KaiA(2-4):KaiC(6), KaiB(6):KaiC(6) and KaiC(6):KaiB(6):KaiA(12) are among the most important forms, many form cooperatively. KaiA and CikA bind to the same region of the KaiB(fs) form and therefore compete.

Its function is as follows. Key component of the KaiABC oscillator complex, which constitutes the main circadian regulator in cyanobacteria. Complex composition changes during the circadian cycle to control KaiC phosphorylation. KaiA stimulates KaiC autophosphorylation, while KaiB sequesters KaiA, leading to KaiC autodephosphorylation. KaiA binding to the KaiC CII domain during the subjective day yields KaiA(2-4):KaiC(6) complexes which stimulate KaiC autophosphorylation. Phospho-Ser-431 KaiC accumulation triggers binding of KaiB during the subjective night to form the KaiB(6):KaiC(6) complex, leading to changes in the output regulators CikA and SasA. KaiB(6):KaiC(6) formation exposes a site for KaiA binding on KaiB that sequesters KaiA from KaiC's CII domain, making the KaiC(6):KaiB(6):KaiA(12) complex resulting in KaiC autodephosphorylation. Complete dephosphorylation of KaiC leads to dissociation of KaiA(2):KaiB(1), completing 1 cycle of the Kai oscillator. This Nostoc sp. (strain PCC 7120 / SAG 25.82 / UTEX 2576) protein is Circadian clock oscillator protein KaiA.